Here is a 393-residue protein sequence, read N- to C-terminus: Dual specificity mitogen-activated protein kinase kinase 1 (393 aa).

Residues 1–26 (MPKKKPTPIQLNPTPDGSAVNGTSSA) are disordered. Over residues 9–26 (IQLNPTPDGSAVNGTSSA) the composition is skewed to polar residues. The 294-residue stretch at 68 to 361 (FEKISELGAG…LKQLLVHAFI (294 aa)) folds into the Protein kinase domain. ATP contacts are provided by residues 74 to 82 (LGAGNGGVV) and Lys97. The active-site Proton acceptor is Asp190. 2 positions are modified to phosphoserine; by RAF: Ser218 and Ser222. Positions 270 to 307 (ELELLFGCQVEGDAAETPPRPRTPGRPLSSYGMDSRPP) are RAF1-binding. Thr286 is subject to Phosphothreonine. At Thr292 the chain carries Phosphothreonine; by MAPK1. Ser298 carries the post-translational modification Phosphoserine; by PAK.

Belongs to the protein kinase superfamily. STE Ser/Thr protein kinase family. MAP kinase kinase subfamily. In terms of assembly, found in a complex with at least BRAF, HRAS, MAP2K1, MAPK3/ERK1 and RGS14. Forms a heterodimer with MAP2K2/MEK2. Forms heterodimers with KSR2 which further dimerize to form tetramers. Interacts with KSR1 or KSR2 and BRAF; the interaction with KSR1 or KSR2 mediates KSR1-BRAF or KSR2-BRAF dimerization. Interacts with ARBB2, LAMTOR3, MAPK1/ERK2 and RAF1. Interacts with MAPK1/ERK2. Interacts with MORG1. Interacts with PPARG. Interacts with isoform 1 of VRK2. Interacts with SGK1. Interacts with BIRC6/bruce. Interacts with KAT7; the interaction promotes KAT7 phosphorylation. Interacts with RAF1 and NEK10; the interaction is required for ERK1/2-signaling pathway activation in response to UV irradiation. Interacts with TRAF3IP3. Interacts with MOS. In terms of processing, phosphorylation at Ser-218 and Ser-222 by MAP kinase kinase kinases (BRAF or MEKK1) positively regulates the kinase activity. Also phosphorylated at Thr-292 by MAPK1/ERK2 and at Ser-298 by PAK. MAPK1/ERK2 phosphorylation of Thr-292 occurs in response to cellular adhesion and leads to inhibition of Ser-298 phosphorylation by PAK. Autophosphorylated at Ser-218 and Ser-222, autophosphosphorylation is promoted by NEK10 following UV irradiation.

The protein resides in the cytoplasm. Its subcellular location is the cytoskeleton. It localises to the microtubule organizing center. The protein localises to the centrosome. It is found in the spindle pole body. The protein resides in the nucleus. Its subcellular location is the membrane. It catalyses the reaction L-seryl-[protein] + ATP = O-phospho-L-seryl-[protein] + ADP + H(+). It carries out the reaction L-threonyl-[protein] + ATP = O-phospho-L-threonyl-[protein] + ADP + H(+). The enzyme catalyses L-tyrosyl-[protein] + ATP = O-phospho-L-tyrosyl-[protein] + ADP + H(+). Ras proteins such as HRAS mediate the activation of RAF proteins such as RAF1 or BRAF which in turn activate extracellular signal-regulated kinases (ERK) through MAPK (mitogen-activated protein kinases) and ERK kinases MAP2K1/MEK1 and MAP2K2/MEK2. Activation occurs through phosphorylation of Ser-218 and Ser-222. MAP2K1/MEK1 binds KSR1 or KSR2 releasing the inhibitory intramolecular interaction between KSR1 or KSR2 protein kinase and N-terminal domains. This allows KSR1 or KSR2 dimerization with BRAF leading to BRAF activation and phosphorylation of MAP2K1. MAP2K1/MEK1 is also the target of negative feed-back regulation by its substrate kinases, such as MAPK1/ERK2. These phosphorylate MAP2K1/MEK1 on Thr-292, thereby facilitating dephosphorylation of the activating residues Ser-218 and Ser-222. Inhibited by serine/threonine phosphatase 2A. Functionally, dual specificity protein kinase which acts as an essential component of the MAP kinase signal transduction pathway. Binding of extracellular ligands such as growth factors, cytokines and hormones to their cell-surface receptors activates RAS and this initiates RAF1 activation. RAF1 then further activates the dual-specificity protein kinases MAP2K1/MEK1 and MAP2K2/MEK2. Both MAP2K1/MEK1 and MAP2K2/MEK2 function specifically in the MAPK/ERK cascade, and catalyze the concomitant phosphorylation of a threonine and a tyrosine residue in a Thr-Glu-Tyr sequence located in the extracellular signal-regulated kinases MAPK3/ERK1 and MAPK1/ERK2, leading to their activation and further transduction of the signal within the MAPK/ERK cascade. Activates BRAF in a KSR1 or KSR2-dependent manner; by binding to KSR1 or KSR2 releases the inhibitory intramolecular interaction between KSR1 or KSR2 protein kinase and N-terminal domains which promotes KSR1 or KSR2-BRAF dimerization and BRAF activation. Depending on the cellular context, this pathway mediates diverse biological functions such as cell growth, adhesion, survival and differentiation, predominantly through the regulation of transcription, metabolism and cytoskeletal rearrangements. One target of the MAPK/ERK cascade is peroxisome proliferator-activated receptor gamma (PPARG), a nuclear receptor that promotes differentiation and apoptosis. MAP2K1/MEK1 has been shown to export PPARG from the nucleus. The MAPK/ERK cascade is also involved in the regulation of endosomal dynamics, including lysosome processing and endosome cycling through the perinuclear recycling compartment (PNRC), as well as in the fragmentation of the Golgi apparatus during mitosis. This is Dual specificity mitogen-activated protein kinase kinase 1 (MAP2K1) from Cricetulus griseus (Chinese hamster).